The chain runs to 88 residues: Meiosis expressed gene 1 protein homolog (88 aa).

It belongs to the MEIG1 family. In terms of assembly, interacts with PACRG. Interacts with MORN3.

In terms of biological role, essential for spermiogenesis. The polypeptide is Meiosis expressed gene 1 protein homolog (Homo sapiens (Human)).